We begin with the raw amino-acid sequence, 294 residues long: ATP phosphoribosyltransferase (294 aa).

This sequence belongs to the ATP phosphoribosyltransferase family. Long subfamily. The cofactor is Mg(2+).

It is found in the cytoplasm. It catalyses the reaction 1-(5-phospho-beta-D-ribosyl)-ATP + diphosphate = 5-phospho-alpha-D-ribose 1-diphosphate + ATP. It functions in the pathway amino-acid biosynthesis; L-histidine biosynthesis; L-histidine from 5-phospho-alpha-D-ribose 1-diphosphate: step 1/9. Its activity is regulated as follows. Feedback inhibited by histidine. In terms of biological role, catalyzes the condensation of ATP and 5-phosphoribose 1-diphosphate to form N'-(5'-phosphoribosyl)-ATP (PR-ATP). Has a crucial role in the pathway because the rate of histidine biosynthesis seems to be controlled primarily by regulation of HisG enzymatic activity. This chain is ATP phosphoribosyltransferase, found in Pelodictyon phaeoclathratiforme (strain DSM 5477 / BU-1).